Here is a 71-residue protein sequence, read N- to C-terminus: Small ribosomal subunit protein bS21 (71 aa).

It belongs to the bacterial ribosomal protein bS21 family.

This is Small ribosomal subunit protein bS21 from Thioalkalivibrio sulfidiphilus (strain HL-EbGR7).